Here is a 584-residue protein sequence, read N- to C-terminus: Eukaryotic translation initiation factor 2D (584 aa).

Met1 is modified (N-acetylmethionine). One can recognise a PUA domain in the interval 93-173; it reads LPTFTTWPLV…RGFSVLHTYQ (81 aa). Residues 223-257 form a disordered region; that stretch reads EEENGEVHQAREDKSLSEAPEDTSTRGLNQDSTDS. Residues 227-238 show a composition bias toward basic and acidic residues; the sequence is GEVHQAREDKSL. A phosphoserine mark is found at Ser237, Ser254, and Ser361. Residues 247–257 show a composition bias toward polar residues; it reads TRGLNQDSTDS. The SWIB/MDM2 domain maps to 383 to 467; the sequence is PLYCVPASMT…DSLLTRCLEK (85 aa). The SUI1 domain occupies 491–564; the sequence is IDITLAQRAS…HLGWLLLEEY (74 aa).

The protein belongs to the eIF2D family.

It is found in the cytoplasm. Its function is as follows. Translation initiation factor that is able to deliver tRNA to the P-site of the eukaryotic ribosome in a GTP-independent manner. The binding of Met-tRNA(I) occurs after the AUG codon finds its position in the P-site of 40S ribosomes, the situation that takes place during initiation complex formation on some specific RNAs. Its activity in tRNA binding with 40S subunits does not require the presence of the aminoacyl moiety. Possesses the unique ability to deliver non-Met (elongator) tRNAs into the P-site of the 40S subunit. In addition to its role in initiation, can promote release of deacylated tRNA and mRNA from recycled 40S subunits following ABCE1-mediated dissociation of post-termination ribosomal complexes into subunits. The chain is Eukaryotic translation initiation factor 2D (EIF2D) from Homo sapiens (Human).